We begin with the raw amino-acid sequence, 398 residues long: ATP-dependent RNA helicase eIF4A (398 aa).

The Q motif signature appears at 25 to 53 (DSFDSMELKPELLRGIYAYGFERPSAIQQ). Positions 56–226 (ILPIIKGNDV…TKFMRDPVRI (171 aa)) constitute a Helicase ATP-binding domain. 69–76 (AQSGTGKT) contacts ATP. The DEAD box signature appears at 174-177 (DEAD). The 162-residue stretch at 237–398 (GIKQFYIAVE…EMPMNVADLI (162 aa)) folds into the Helicase C-terminal domain.

This sequence belongs to the DEAD box helicase family. eIF4A subfamily. Component of the eIF4F complex, which composition varies with external and internal environmental conditions. It is composed of at least eIF4A, eIF4E and eIF4G.

The protein resides in the cytoplasm. It catalyses the reaction ATP + H2O = ADP + phosphate + H(+). ATP-dependent RNA helicase which is a subunit of the eIF4F complex involved in cap recognition and is required for mRNA binding to ribosome. In the current model of translation initiation, eIF4A unwinds RNA secondary structures in the 5'-UTR of mRNAs which is necessary to allow efficient binding of the small ribosomal subunit, and subsequent scanning for the initiator codon. In Neosartorya fischeri (strain ATCC 1020 / DSM 3700 / CBS 544.65 / FGSC A1164 / JCM 1740 / NRRL 181 / WB 181) (Aspergillus fischerianus), this protein is ATP-dependent RNA helicase eIF4A (tif1).